Here is a 481-residue protein sequence, read N- to C-terminus: Bifunctional protein GlmU (481 aa).

Residues 1-235 (MTHKERPLDV…PDEVMGANDR (235 aa)) form a pyrophosphorylase region. UDP-N-acetyl-alpha-D-glucosamine-binding positions include 13-16 (LAAG), Lys27, Gln78, 83-84 (GT), 107-109 (YGD), Gly146, Glu161, Asn176, and Asn233. A Mg(2+)-binding site is contributed by Asp109. A Mg(2+)-binding site is contributed by Asn233. The segment at 236-256 (VQLAQAAAVLRRRINTAHMQA) is linker. The tract at residues 257 to 481 (GVTLQDPSTI…PWLAGWLERQ (225 aa)) is N-acetyltransferase. UDP-N-acetyl-alpha-D-glucosamine contacts are provided by Arg339 and Lys357. Catalysis depends on His369, which acts as the Proton acceptor. UDP-N-acetyl-alpha-D-glucosamine is bound by residues Tyr372 and Asn383. Residues Ala386, Ser411, Ala429, and Arg446 each coordinate acetyl-CoA.

In the N-terminal section; belongs to the N-acetylglucosamine-1-phosphate uridyltransferase family. This sequence in the C-terminal section; belongs to the transferase hexapeptide repeat family. As to quaternary structure, homotrimer. Mg(2+) serves as cofactor.

It is found in the cytoplasm. The catalysed reaction is alpha-D-glucosamine 1-phosphate + acetyl-CoA = N-acetyl-alpha-D-glucosamine 1-phosphate + CoA + H(+). The enzyme catalyses N-acetyl-alpha-D-glucosamine 1-phosphate + UTP + H(+) = UDP-N-acetyl-alpha-D-glucosamine + diphosphate. The protein operates within nucleotide-sugar biosynthesis; UDP-N-acetyl-alpha-D-glucosamine biosynthesis; N-acetyl-alpha-D-glucosamine 1-phosphate from alpha-D-glucosamine 6-phosphate (route II): step 2/2. It functions in the pathway nucleotide-sugar biosynthesis; UDP-N-acetyl-alpha-D-glucosamine biosynthesis; UDP-N-acetyl-alpha-D-glucosamine from N-acetyl-alpha-D-glucosamine 1-phosphate: step 1/1. Its pathway is bacterial outer membrane biogenesis; LPS lipid A biosynthesis. Its function is as follows. Catalyzes the last two sequential reactions in the de novo biosynthetic pathway for UDP-N-acetylglucosamine (UDP-GlcNAc). The C-terminal domain catalyzes the transfer of acetyl group from acetyl coenzyme A to glucosamine-1-phosphate (GlcN-1-P) to produce N-acetylglucosamine-1-phosphate (GlcNAc-1-P), which is converted into UDP-GlcNAc by the transfer of uridine 5-monophosphate (from uridine 5-triphosphate), a reaction catalyzed by the N-terminal domain. This is Bifunctional protein GlmU from Deinococcus geothermalis (strain DSM 11300 / CIP 105573 / AG-3a).